Reading from the N-terminus, the 363-residue chain is Apelin receptor B (363 aa).

The Extracellular segment spans residues 1 to 38 (MESEGFSATTEQYEYYDYANETGLQPCDETDWDFSYSL). N-linked (GlcNAc...) asparagine glycosylation occurs at asparagine 20. 2 cysteine pairs are disulfide-bonded: cysteine 27-cysteine 287 and cysteine 109-cysteine 186. Residues 39–59 (LPVFYMIVFVLGLSGNGVVIF) traverse the membrane as a helical segment. At 60–77 (TVWKAKPKRRSADTYIGN) the chain is on the cytoplasmic side. Residues 78–98 (LALADLAFVVTLPLWATYTAL) traverse the membrane as a helical segment. At 99–111 (GFHWPFGSALCKL) the chain is on the extracellular side. The chain crosses the membrane as a helical span at residues 112 to 132 (SSYLVLLNMFASVFCLTCLSF). Topologically, residues 133–152 (DRYLAIVHSLSSAKLRSRSS) are cytoplasmic. Residues 153 to 173 (ILVSLAVIWLFSGLLALPSLI) traverse the membrane as a helical segment. The Extracellular portion of the chain corresponds to 174–200 (LRDTRVEGNNTICDLDFSGVSSKENEN). Asparagine 182 carries an N-linked (GlcNAc...) asparagine glycan. Residues 201–221 (FWIGGLSILTTVPGFLLPLLL) traverse the membrane as a helical segment. Over 222–249 (MTIFYCFIGGKVTMHFQNLKKEEQKKKR) the chain is Cytoplasmic. The chain crosses the membrane as a helical span at residues 250–270 (LLKIIITLVVVFAICWLPFHI). Residues 271–297 (LKTIHFLDLMGFLELSCSAQNIIVSLH) are Extracellular-facing. The helical transmembrane segment at 298–318 (PYATCLAYVNSCLNPFLYAFF) threads the bilayer. Over 319 to 363 (DLRFRSQCFFFFGFKKVLQGHLSNTSSSLSAQTQKSEIHSLATKV) the chain is Cytoplasmic.

Belongs to the G-protein coupled receptor 1 family. As to expression, expressed in all blood vessels including the posterior cardinal vein, intersomitic veins and the vitelline vein network.

It localises to the cell membrane. G protein-coupled receptor for peptide hormones apelin (apln) and apelin receptor early endogenous ligand (apela), that plays a role in the regulation of normal cardiovascular function and fluid homeostasis. When acting as apelin receptor, activates both G(i) protein pathway that inhibits adenylate cyclase activity, and the beta-arrestin pathway that promotes internalization of the receptor. Also functions as mechanoreceptor that is activated by pathological stimuli in a G-protein-independent fashion to induce beta-arrestin signaling, hence eliciting cardiac hypertrophy. However, the presence of apelin ligand blunts cardiac hypertrophic induction from APLNR/APJ on response to pathological stimuli. Plays a key role in early development such as gastrulation, blood vessels formation and heart morphogenesis by acting as a receptor for apela hormone, promoting endoderm and mesendoderm cell migration and regulating the migration of cells fated to become myocardial progenitors, respectively. Promotes angioblast migration toward the embryonic midline, i.e. the position of the future vessel formation, during vasculogenesis. May promote sinus venosus (SV)-derived endothelial cells migration into the developing heart to promote coronary blood vessel development. Required for cardiovascular development, particularly for intersomitic vein angiogenesis by acting as a receptor for apln hormone. Also plays a role in various processes in adults such as regulation of blood vessel formation, blood pressure, heart contractility, and heart failure. Acts upstream of the i/o type of G-alpha proteins in the differentiation of endothelium, erythroid cells, myeloid cells and cardiomyocytes. In Xenopus laevis (African clawed frog), this protein is Apelin receptor B (aplnr-b).